The primary structure comprises 128 residues: Aspartate 1-decarboxylase (128 aa).

Catalysis depends on S25, which acts as the Schiff-base intermediate with substrate; via pyruvic acid. The residue at position 25 (S25) is a Pyruvic acid (Ser). Residue T57 coordinates substrate. The active-site Proton donor is the Y58. 73-75 (GSA) lines the substrate pocket.

This sequence belongs to the PanD family. In terms of assembly, heterooctamer of four alpha and four beta subunits. The cofactor is pyruvate. In terms of processing, is synthesized initially as an inactive proenzyme, which is activated by self-cleavage at a specific serine bond to produce a beta-subunit with a hydroxyl group at its C-terminus and an alpha-subunit with a pyruvoyl group at its N-terminus.

Its subcellular location is the cytoplasm. The enzyme catalyses L-aspartate + H(+) = beta-alanine + CO2. It participates in cofactor biosynthesis; (R)-pantothenate biosynthesis; beta-alanine from L-aspartate: step 1/1. Functionally, catalyzes the pyruvoyl-dependent decarboxylation of aspartate to produce beta-alanine. This chain is Aspartate 1-decarboxylase, found in Paraburkholderia xenovorans (strain LB400).